A 265-amino-acid polypeptide reads, in one-letter code: Probable FAD synthase (265 aa).

It belongs to the PAPS reductase family. FAD1 subfamily.

The enzyme catalyses FMN + ATP + H(+) = FAD + diphosphate. Its pathway is cofactor biosynthesis; FAD biosynthesis; FAD from FMN: step 1/1. Adenylates FMN to FAD. In Schizosaccharomyces pombe (strain 972 / ATCC 24843) (Fission yeast), this protein is Probable FAD synthase.